Here is a 400-residue protein sequence, read N- to C-terminus: Nucleoside permease NupC (400 aa).

At 1–3 (MDR) the chain is on the cytoplasmic side. Residues 4–24 (VLHFVLALAVVAILALLVSSD) traverse the membrane as a helical segment. The Periplasmic portion of the chain corresponds to 25–36 (RKKIRIRYVIQL). The helical transmembrane segment at 37 to 57 (LVIEVLLAWFFLNSDVGLGFV) threads the bilayer. At 58-86 (KGFSEMFEKLLGFANEGTNFVFGSMNDQG) the chain is on the cytoplasmic side. A helical membrane pass occupies residues 87 to 107 (LAFFFLKVLCPIVFISALIGI). The Periplasmic portion of the chain corresponds to 108–168 (LQHIRVLPVI…GKISRNRMYT (61 aa)). A helical transmembrane segment spans residues 169-189 (MAATAMSTVSMSIVGAYMTML). Residues 190 to 192 (EPK) are Cytoplasmic-facing. The helical transmembrane segment at 193–213 (YVVAALVLNMFSTFIVLSLIN) threads the bilayer. Topologically, residues 214-250 (PYRVDASEENIQMSNLHEGQSFFEMLGEYILAGFKVA) are periplasmic. The chain crosses the membrane as a helical span at residues 251–271 (IIVAAMLIGFIALIAALNALF). The Cytoplasmic portion of the chain corresponds to 272 to 281 (ATVTGWFGYS). Residues 282–302 (ISFQGILGYIFYPIAWVMGVP) form a helical membrane-spanning segment. At 303–341 (SSEALQVGSIMATKLVSNEFVAMMDLQKIASTLSPRAEG) the chain is on the periplasmic side. The helical transmembrane segment at 342 to 362 (IISVFLVSFANFSSIGIIAGA) threads the bilayer. The Cytoplasmic portion of the chain corresponds to 363–378 (VKGLNEEQGNVVSRFG). Residues 379–399 (LKLVYGSTLVSVLSASIAALV) form a helical membrane-spanning segment. Residue Leu400 is a topological domain, periplasmic.

The protein belongs to the concentrative nucleoside transporter (CNT) (TC 2.A.41) family.

It is found in the cell inner membrane. It catalyses the reaction adenosine(in) + H(+)(in) = adenosine(out) + H(+)(out). The enzyme catalyses uridine(in) + H(+)(in) = uridine(out) + H(+)(out). The catalysed reaction is thymidine(in) + H(+)(in) = thymidine(out) + H(+)(out). It carries out the reaction cytidine(in) + H(+)(in) = cytidine(out) + H(+)(out). It catalyses the reaction 2'-deoxycytidine(in) + H(+)(in) = 2'-deoxycytidine(out) + H(+)(out). Its activity is regulated as follows. Transport is inhibited by the proton uncoupler dinitrophenol. Inhibited by the nucleoside antibiotic showdomycin. Nucleoside transport protein that can transport adenosine, uridine, thymidine, cytidine and deoxycytidine. Shows weak activity with inosine and xanthosine. Transport is driven by a proton motive force. Does not transport guanosine, deoxyguanosine, hypoxanthine or uracil. Also shows activity with the chemotherapeutic drugs 3'-azido-3'-deoxythymidine (AZT), 2',3'- dideoxycytidine (ddC) and 2'-deoxy-2',2'-difluorocytidine (gemcitabine). The protein is Nucleoside permease NupC of Escherichia coli (strain K12).